The chain runs to 459 residues: MEQTEGNSSEDGTTVSPTAGNLETPGSQGIAEEVAEGTVGTSDKEGPSDWAEHLCKAASKSGESGGSPGEASILDELKTDLQGEARGKDEAQGDLAEEKVGKEDTTAASQEDTGKKEETKPEPNEVREKEEAMLASEKQKVDEKETNLESKEKSDVNDKAKPEPKEDAGAEVTVNEAETESQEEADVKDQAKPELPEVDGKETGSDTKELVEPESPTEEQEQGKENESEERAAVIPSSPEEWPESPTDEGPSLSPDGLAPESTGETSPSASESSPSEVPGSPTEPQPSEKKKDRAPERRVSAPSRPRGPRAQNRKAIMDKFGGAASGPTALFRNTKAAGAAIGGVKNMLLEWCRAMTRNYEHVDIQNFSSSWSSGMAFCALIHKFFPEAFDYAELDPAKRRHNFTLAFSTAEKLADCAQLLEVDDMVRLAVPDSKCVYTYIQELYRSLVQKGLVKTKKK.

Residues 1-27 show a composition bias toward polar residues; the sequence is MEQTEGNSSEDGTTVSPTAGNLETPGS. The interval 1-314 is disordered; the sequence is MEQTEGNSSE…RPRGPRAQNR (314 aa). 5 stretches are compositionally biased toward basic and acidic residues: residues 42–55, 75–105, 112–168, 185–211, and 221–232; these read SDKE…EHLC, DELK…KEDT, DTGK…KEDA, ADVK…KELV, and EQGKENESEERA. A coiled-coil region spans residues 124 to 154; sequence NEVREKEEAMLASEKQKVDEKETNLESKEKS. A compositionally biased stretch (low complexity) spans 260-283; that stretch reads PESTGETSPSASESSPSEVPGSPT. The span at 287-300 shows a compositional bias: basic and acidic residues; the sequence is PSEKKKDRAPERRV. Serine 301 is modified (phosphoserine; by PKA and PKG). The Calponin-homology (CH) domain maps to 343-449; that stretch reads GGVKNMLLEW…YIQELYRSLV (107 aa). Positions 441–459 are calmodulin-binding; it reads IQELYRSLVQKGLVKTKKK.

The protein belongs to the smoothelin family. As to quaternary structure, interacts with PPP1R12A. In terms of processing, maximal phosphorylation of Ser-301 correlates with maximal relaxation of aorta in response to acetylcholine. In terms of tissue distribution, widely expressed, with highest expression in skeletal muscles (at protein level). Within striated muscles, significantly more expressed in soleus muscle compared with plantaris muscle or white vastus (at protein level). 30-40% lower expression in females than in males (at protein level). Expressed in type 2a fibers, but not detected in fast twitch type 2b muscle white vastus nor in oxidative type I/b heart muscle (at protein level). Expressed within myometrial cells of the uterus, as well as in the endometrial layer. In the aorta, confined to smooth muscle cells. Not detected in endothelial cells.

Its subcellular location is the cytoplasm. It localises to the myofibril. The protein localises to the sarcomere. The protein resides in the i band. It is found in the m line. Its subcellular location is the nucleus. In terms of biological role, plays a role in the regulation of contractile properties of both striated and smooth muscles. When unphosphorylated, may inhibit myosin dephosphorylation. Phosphorylation at Ser-301 reduces this inhibitory activity. The protein is Smoothelin-like protein 1 (Smtnl1) of Mus musculus (Mouse).